The following is a 260-amino-acid chain: MIYKNVEFSAIVTKRKNYRERDMLVTMFTDKYGFKTFFVRGVRKRGFKLGAAILPFTHGTYIGSINSEGLSFITATKGIDQFQSINQDIILNAYATYILELVKAAFEDSIDVTNTLWFEKVLKALSLINDGFDAQIIANIIEVQLLGKFGVQPNWRSCVICGETQSQFDYSESYGGILCRKHWYMDKNRLNLDQRTMYYLRKFSIVDLNYLNSIKVNADTKKKLKLTLNEIYDNQVGIYVKARSFIDKMTKVENNLLKKD.

This sequence belongs to the RecO family.

In terms of biological role, involved in DNA repair and RecF pathway recombination. This Ligilactobacillus salivarius (strain UCC118) (Lactobacillus salivarius) protein is DNA repair protein RecO.